The sequence spans 286 residues: Flagellar filament 33 kDa core protein (286 aa).

Belongs to the bacterial flagellin family. As to quaternary structure, the flagellum consists of an outer layer composed of repeating units of FlaA around a core that contains several antigenically related polypeptides.

It is found in the periplasmic flagellum. Its subcellular location is the periplasm. Component of the core of the flagella. This is Flagellar filament 33 kDa core protein from Treponema phagedenis.